The sequence spans 931 residues: Protein unc-45 homolog B (931 aa).

3 TPR repeats span residues 6–39 (AAQL…TKDK), 43–76 (ATLY…NSAD), and 77–110 (IKAL…EPRN). ARM repeat units lie at residues 169–208 (EAGA…GMCS), 211–250 (RARA…AIID), and 751–790 (DKLR…NMVL).

In terms of assembly, interacts with HSP90 in an ATP-independent manner. Interacts with UBE4B; the interaction may target UNC45B for proteasomal degradation. Highly expressed in adult skeletal muscle and heart. Detected at intermediate levels in lung. Highly expressed in embryonic heart.

It localises to the cytoplasm. The protein localises to the myofibril. Its subcellular location is the sarcomere. The protein resides in the z line. It is found in the a band. It localises to the perinuclear region. The protein localises to the cytosol. Its function is as follows. Acts as a co-chaperone for HSP90 and is required for proper folding of the myosin motor domain. Plays a role in sarcomere formation during muscle cell development. Is necessary for normal early lens development. In Mus musculus (Mouse), this protein is Protein unc-45 homolog B (Unc45b).